Here is a 622-residue protein sequence, read N- to C-terminus: Low affinity potassium transport system protein Kup (622 aa).

12 consecutive transmembrane segments (helical) span residues 12 to 32, 49 to 69, 101 to 121, 134 to 154, 163 to 183, 213 to 233, 247 to 267, 276 to 296, 337 to 357, 363 to 383, 395 to 415, and 419 to 439; these read ITLAAIGVVYGDIGTSPLYTL, VFGFLSLIFWLLILVVSLKYL, FLVIIGLIGGSFFYGEVVITP, IIAPQLDTWVVPLAIIVLTLL, GLVGKLFAPIMLAWFLILAAL, VSFVALGAVVLSITGVEALYA, WFTVVLPSLVLNYFGQGALLL, PFFLLAPDWALVPMLIIATLA, IYIPFINWLLYVAVVIVIVSF, LAAAYGIAVTGTMVLTSILST, FLVALILVGLLCIDLPLFSAN, and IVSGGWLPLTLGLVMFIVMTT.

This sequence belongs to the HAK/KUP transporter (TC 2.A.72) family.

It localises to the cell inner membrane. It carries out the reaction K(+)(in) + H(+)(in) = K(+)(out) + H(+)(out). Its function is as follows. Responsible for the low-affinity transport of potassium into the cell. Likely operates as a K(+):H(+) symporter. The polypeptide is Low affinity potassium transport system protein Kup (Enterobacter sp. (strain 638)).